The following is a 275-amino-acid chain: NH(3)-dependent NAD(+) synthetase (275 aa).

An ATP-binding site is contributed by 50–57; sequence GISGGVDS. Asp-56 contacts Mg(2+). Deamido-NAD(+) is bound at residue Arg-147. Thr-167 lines the ATP pocket. Glu-172 serves as a coordination point for Mg(2+). Residues Lys-180 and Asp-187 each coordinate deamido-NAD(+). Positions 196 and 218 each coordinate ATP. 267–268 provides a ligand contact to deamido-NAD(+); sequence HK.

It belongs to the NAD synthetase family. In terms of assembly, homodimer.

The enzyme catalyses deamido-NAD(+) + NH4(+) + ATP = AMP + diphosphate + NAD(+) + H(+). Its pathway is cofactor biosynthesis; NAD(+) biosynthesis; NAD(+) from deamido-NAD(+) (ammonia route): step 1/1. In terms of biological role, catalyzes the ATP-dependent amidation of deamido-NAD to form NAD. Uses ammonia as a nitrogen source. The polypeptide is NH(3)-dependent NAD(+) synthetase (Pseudomonas entomophila (strain L48)).